A 129-amino-acid chain; its full sequence is uncharacterized protein (129 aa).

Lys121 is covalently cross-linked (Isoglutamyl lysine isopeptide (Lys-Gln) (interchain with Q-Cter in protein Pup)).

This is an uncharacterized protein from Mycolicibacterium smegmatis (strain ATCC 700084 / mc(2)155) (Mycobacterium smegmatis).